Consider the following 421-residue polypeptide: MALRSINKLEVFLKRYSAPTLYYCSNKSAHGATNGIGTDDSNNNYNNNNKNKNGYTGFSWRSVIRFFVPFSLGALASTMVAQREELTPTISARALSGRRREFNFIADVVAGCADSVVYIEIKDTRHFDYFSGQPITASNGSGFVIEQNGLILTNAHVVINKPNTMVQVRLSDGRTFPATIEDVDQTSDLATLRIQVNNLSVMKLGKSSTLRSGEWVVALGSPLALSNTVTAGVISSTQRASQELGLRNRDINYLQTDAAITFGNSGGPLVNLDGEAIGVNSMKVTAGISFAIPIDYVKVFLERAAARRRKGSAYKTGYPVKRYMGITMLTLTPDILFELKSRTQNMPNTLSHGVLVWKVIVGSPAHSGGLQPGDIVTHINKKEIKNSSDVYDALADGKKELDIVILRGVKQMRVTITPEDP.

A helical membrane pass occupies residues 63–81 (VIRFFVPFSLGALASTMVA). An IAP-binding motif is present at residues 74–77 (ALAS). The interval 138-301 (SNGSGFVIEQ…IPIDYVKVFL (164 aa)) is serine protease. Active-site charge relay system residues include His-156, Asp-188, and Ser-265. The 86-residue stretch at 324-409 (MGITMLTLTP…ELDIVILRGV (86 aa)) folds into the PDZ domain.

The protein belongs to the peptidase S1C family. Interacts with th/DIAP1 (via BIR 2 domain).

It is found in the mitochondrion intermembrane space. Its subcellular location is the mitochondrion membrane. The catalysed reaction is Cleavage of non-polar aliphatic amino-acids at the P1 position, with a preference for Val, Ile and Met. At the P2 and P3 positions, Arg is selected most strongly with a secondary preference for other hydrophilic residues.. Its function is as follows. Serine protease that shows proteolytic activity against a non-specific substrate beta-casein. Promotes or induces cell death either by direct binding to and inhibition of BIRC proteins (also called inhibitor of apoptosis proteins, IAPs), leading to an increase in caspase activity, or by a BIRC inhibition-independent, caspase-independent and serine protease activity-dependent mechanism. Can antagonize antiapoptotic activity of th/Diap1 by directly inducing the degradation of th/Diap1. The polypeptide is Serine protease HTRA2, mitochondrial (Drosophila virilis (Fruit fly)).